The primary structure comprises 471 residues: Venom prothrombin activator vestarin-D2 (471 aa).

Residues 1 to 20 (MAPQLLLCLILTFLWSLPEA) form the signal peptide. The propeptide occupies 21 to 40 (ESNVFLKSNVANRFLQRTKR). Positions 41–86 (ANSIFEEIRPGNIERECVEEKCSKEEAREVFQDNEKTEAFWTVYVD) constitute a Gla domain. 4-carboxyglutamate is present on residues glutamate 46, glutamate 47, glutamate 54, glutamate 56, glutamate 59, glutamate 60, glutamate 65, glutamate 66, glutamate 69, and glutamate 75. A disulfide bridge connects residues cysteine 57 and cysteine 62. One can recognise an EGF-like 1; calcium-binding domain in the interval 86-122 (DGDQCLSNPCHYRGTCKDGIGSYTCTCLPGYEGKNCE). 10 cysteine pairs are disulfide-bonded: cysteine 90/cysteine 101, cysteine 95/cysteine 110, cysteine 112/cysteine 121, cysteine 129/cysteine 140, cysteine 136/cysteine 149, cysteine 151/cysteine 164, cysteine 172/cysteine 333, cysteine 233/cysteine 238, cysteine 381/cysteine 395, and cysteine 406/cysteine 434. A glycan (O-linked (Hex...) serine) is linked at serine 92. In terms of domain architecture, EGF-like 2 spans 129–164 (CRLFNGNCWHFCKTVQNDTQCSCAEGYRLGVDGFSC). The propeptide at 182–226 (REASLPDFHFSDDYDAIDENNLVETVQSQSATLLKKSDNPSPDIR) is activation peptide. One can recognise a Peptidase S1 domain in the interval 227–458 (IVSGLDCKLG…FIPWIKTIMR (232 aa)). Catalysis depends on histidine 268, which acts as the Charge relay system. Asparagine 271 carries N-linked (GlcNAc...) asparagine glycosylation. Aspartate 313 (charge relay system) is an active-site residue. Serine 410 serves as the catalytic Charge relay system.

This sequence belongs to the peptidase S1 family. Snake venom subfamily. As to quaternary structure, heterodimer of a light chain and a heavy chain; disulfide-linked. In terms of processing, the vitamin K-dependent, enzymatic carboxylation of some glutamate residues allows the modified protein to bind calcium. As to expression, expressed by the venom gland.

Its subcellular location is the secreted. The enzyme catalyses Selective cleavage of Arg-|-Thr and then Arg-|-Ile bonds in prothrombin to form thrombin.. Functionally, snake prothrombin activator that attacks the hemostatic system of prey. This protein is functionally similar to blood coagulation factor Xa. The protein is Venom prothrombin activator vestarin-D2 of Demansia vestigiata (Lesser black whip snake).